Here is a 267-residue protein sequence, read N- to C-terminus: 4-hydroxy-tetrahydrodipicolinate reductase (267 aa).

Residues 12–17, 100–102, and 126–129 each bind NAD(+); these read GPRGRM, GTT, and APNF. His156 functions as the Proton donor/acceptor in the catalytic mechanism. (S)-2,3,4,5-tetrahydrodipicolinate is bound at residue His157. The active-site Proton donor is the Lys160. 166–167 contacts (S)-2,3,4,5-tetrahydrodipicolinate; the sequence is GT.

Belongs to the DapB family.

It localises to the cytoplasm. The catalysed reaction is (S)-2,3,4,5-tetrahydrodipicolinate + NAD(+) + H2O = (2S,4S)-4-hydroxy-2,3,4,5-tetrahydrodipicolinate + NADH + H(+). It carries out the reaction (S)-2,3,4,5-tetrahydrodipicolinate + NADP(+) + H2O = (2S,4S)-4-hydroxy-2,3,4,5-tetrahydrodipicolinate + NADPH + H(+). Its pathway is amino-acid biosynthesis; L-lysine biosynthesis via DAP pathway; (S)-tetrahydrodipicolinate from L-aspartate: step 4/4. Catalyzes the conversion of 4-hydroxy-tetrahydrodipicolinate (HTPA) to tetrahydrodipicolinate. The protein is 4-hydroxy-tetrahydrodipicolinate reductase of Bacillus velezensis (strain DSM 23117 / BGSC 10A6 / LMG 26770 / FZB42) (Bacillus amyloliquefaciens subsp. plantarum).